We begin with the raw amino-acid sequence, 373 residues long: MFRGKPNSIETLILQATDEKNTKEKWDVIMDACDQLSSTSGDVGRNSIKFLNKRLDTANANIQLLALTLTDAIVKNCKTSIVREISSRTFTDSLLKIASDSTTHNRVRSRIAVLVNEWAEIMKKDPNMSLMQDICEKIRKLDIVDLRAPKKPEKEAMNELELKREEEELQYALALSLSESTAQSNKVENPQSTKDEPLQKTNQRQESNLATSPASTVSRVRALYDFAATEQGELSFKKGDIILVLESVYKDWWKGSCKNAVGIFPVNYVQRVVEPTIEQQRQSAHMEQQVFDALPQIDELLDTLSTTSPDAADDDALQGKYHAMIALRPKLVRLIEKYASQKEELMDLNERLLVARRDYEKLYEQSMSEMRNF.

The VHS domain maps to Ala16–Leu146. The UIM domain occupies Arg164–Gln183. 2 stretches are compositionally biased toward polar residues: residues Ser180–Ser192 and Gln199–Pro213. A disordered region spans residues Ser180 to Pro213. In terms of domain architecture, SH3 spans Ser215–Glu274.

Belongs to the STAM family. In terms of assembly, component of the ESCRT-0 complex composed of hse1 and sst4.

The protein resides in the endosome membrane. Component of the ESCRT-0 complex which is the sorting receptor for ubiquitinated cargo proteins at the multivesicular body (MVB). The sequence is that of Class E vacuolar protein-sorting machinery protein hse1 (hse1) from Schizosaccharomyces pombe (strain 972 / ATCC 24843) (Fission yeast).